A 370-amino-acid polypeptide reads, in one-letter code: GTPase Obg (370 aa).

Residues 1–159 (MKFIDEARIE…RMLRLELKVL (159 aa)) enclose the Obg domain. Residues 127–146 (NLHFKSSTNRAPRQKTDGKP) form a disordered region. The OBG-type G domain occupies 160 to 334 (ADVGLLGMPN…LCYAIYDYLA (175 aa)). GTP contacts are provided by residues 166–173 (GMPNAGKS), 191–195 (FTTLA), 213–216 (DIPG), 284–287 (NKLD), and 315–317 (SAL). 2 residues coordinate Mg(2+): serine 173 and threonine 193.

It belongs to the TRAFAC class OBG-HflX-like GTPase superfamily. OBG GTPase family. As to quaternary structure, monomer. Mg(2+) is required as a cofactor.

It localises to the cytoplasm. Its function is as follows. An essential GTPase which binds GTP, GDP and possibly (p)ppGpp with moderate affinity, with high nucleotide exchange rates and a fairly low GTP hydrolysis rate. Plays a role in control of the cell cycle, stress response, ribosome biogenesis and in those bacteria that undergo differentiation, in morphogenesis control. In Burkholderia lata (strain ATCC 17760 / DSM 23089 / LMG 22485 / NCIMB 9086 / R18194 / 383), this protein is GTPase Obg.